The primary structure comprises 260 residues: Adenosylcobinamide-GDP ribazoletransferase (260 aa).

Helical transmembrane passes span 40–60 (AFPF…LLLL), 64–84 (TDPL…TGAL), 117–137 (YGAI…AAII), 142–162 (PLAA…AIAW), 188–208 (HFAL…PFGL), and 210–230 (PLVA…VFIR).

Belongs to the CobS family. Mg(2+) is required as a cofactor.

It is found in the cell inner membrane. It carries out the reaction alpha-ribazole + adenosylcob(III)inamide-GDP = adenosylcob(III)alamin + GMP + H(+). The catalysed reaction is alpha-ribazole 5'-phosphate + adenosylcob(III)inamide-GDP = adenosylcob(III)alamin 5'-phosphate + GMP + H(+). The protein operates within cofactor biosynthesis; adenosylcobalamin biosynthesis; adenosylcobalamin from cob(II)yrinate a,c-diamide: step 7/7. Functionally, joins adenosylcobinamide-GDP and alpha-ribazole to generate adenosylcobalamin (Ado-cobalamin). Also synthesizes adenosylcobalamin 5'-phosphate from adenosylcobinamide-GDP and alpha-ribazole 5'-phosphate. The chain is Adenosylcobinamide-GDP ribazoletransferase from Rhizobium etli (strain ATCC 51251 / DSM 11541 / JCM 21823 / NBRC 15573 / CFN 42).